Here is a 183-residue protein sequence, read N- to C-terminus: Large ribosomal subunit protein uL6 (183 aa).

Belongs to the universal ribosomal protein uL6 family. In terms of assembly, part of the 50S ribosomal subunit.

In terms of biological role, this protein binds to the 23S rRNA, and is important in its secondary structure. It is located near the subunit interface in the base of the L7/L12 stalk, and near the tRNA binding site of the peptidyltransferase center. This Chlamydia abortus (strain DSM 27085 / S26/3) (Chlamydophila abortus) protein is Large ribosomal subunit protein uL6.